The chain runs to 382 residues: Pectinesterase (382 aa).

The N-terminal stretch at 1–16 (MKIIVLLLLAVVLASA) is a signal peptide. An intrachain disulfide couples C153 to C164. N179 carries N-linked (GlcNAc...) asparagine glycosylation. A substrate-binding site is contributed by Q193. D216 functions as the Proton donor in the catalytic mechanism. The active-site Nucleophile is the D242. Substrate contacts are provided by R306 and W308. Residues N340 and N376 are each glycosylated (N-linked (GlcNAc...) asparagine).

Belongs to the pectinesterase family. As to expression, expressed throughout the midgut with particularly strong expression in the ventriculus.

It localises to the secreted. It carries out the reaction [(1-&gt;4)-alpha-D-galacturonosyl methyl ester](n) + n H2O = [(1-&gt;4)-alpha-D-galacturonosyl](n) + n methanol + n H(+). Its pathway is glycan metabolism; pectin degradation; 2-dehydro-3-deoxy-D-gluconate from pectin: step 1/5. Its function is as follows. Pectinesterase which probably plays an important role in the digestion of plant cell walls. The polypeptide is Pectinesterase (Sitophilus oryzae (Rice weevil)).